Consider the following 151-residue polypeptide: UPAR/Ly6 domain-containing protein rtv (151 aa).

The first 19 residues, methionine 1–isoleucine 19, serve as a signal peptide directing secretion. The Extracellular segment spans residues aspartate 20–serine 125. 5 disulfide bridges follow: cysteine 26/cysteine 65, cysteine 29/cysteine 38, cysteine 60/cysteine 88, cysteine 100/cysteine 113, and cysteine 115/cysteine 120. A glycan (N-linked (GlcNAc...) asparagine) is linked at asparagine 45. Asparagine 121 carries GPI-anchor amidated asparagine lipidation. The propeptide at glycine 122–asparagine 151 is removed in mature form. A helical transmembrane segment spans residues tryptophan 126–leucine 146. At glutamine 147–asparagine 151 the chain is on the cytoplasmic side.

This sequence belongs to the quiver family.

It is found in the cell membrane. Its function is as follows. Required for chitin fiber assembly and organization involved in cuticle formation and tracheal development. This Drosophila melanogaster (Fruit fly) protein is UPAR/Ly6 domain-containing protein rtv.